A 492-amino-acid chain; its full sequence is Homoserine O-acetyltransferase (492 aa).

The AB hydrolase-1 domain occupies 47-352 (NAILVFHALS…KSIYGHDAFL (306 aa)). Serine 152 acts as the Nucleophile in catalysis. Position 221 (arginine 221) interacts with substrate. Catalysis depends on residues aspartate 315 and histidine 348. A substrate-binding site is contributed by aspartate 349. CBS domains are found at residues 375–431 (MTKN…ENSI) and 440–492 (MTKN…TITI).

The protein belongs to the AB hydrolase superfamily. MetX family. Homodimer.

It is found in the cytoplasm. The enzyme catalyses L-homoserine + acetyl-CoA = O-acetyl-L-homoserine + CoA. Its pathway is amino-acid biosynthesis; L-methionine biosynthesis via de novo pathway; O-acetyl-L-homoserine from L-homoserine: step 1/1. Functionally, transfers an acetyl group from acetyl-CoA to L-homoserine, forming acetyl-L-homoserine. This chain is Homoserine O-acetyltransferase, found in Methanococcus vannielii (strain ATCC 35089 / DSM 1224 / JCM 13029 / OCM 148 / SB).